Consider the following 193-residue polypeptide: Sporulation-specific transcriptional regulator GerR (193 aa).

The HTH myb-type domain occupies 1-61 (MTITRQDAWT…RWNSYVRKQY (61 aa)). Positions 35–57 (FEEVGRALTRTAAACGFRWNSYV) form a DNA-binding region, H-T-H motif. Positions 122 to 177 (AQEFQLEREKLKEQIQSLQKELEDLRSENQTLRNQLEMTEEDYKALIDIMDRARKM) form a coiled coil.

The protein belongs to the RsfA transcriptional regulator family.

Its function is as follows. Transcriptional factor that regulates the expression of several late sporulation genes. Controls genes of both sigma-E and sigma-K regulons, acting alone on some genes and in conjunction with SpoIIID or GerE on others. Regulates, directly or indirectly, the expression of genes encoding coat proteins such as cgeA, cotB, cotC, cotG, cotU and cotY. Controls late sporulation genes in two ways: directly, by binding to the promoter region of genes such as cotB, cotU and spoVIF, and acting directly on their transcription, and indirectly, through the activation of SpoVIF, which stabilizes the transcriptional activator GerE and consequently induces the expression of the GerE-dependent genes, such as cotC and cotG. Its effect is strongly positive on spoVIF, cotC, and cotG, weakly positive on cotB, and negative on cotU. In Bacillus subtilis (strain 168), this protein is Sporulation-specific transcriptional regulator GerR.